The following is a 413-amino-acid chain: Argininosuccinate synthase (413 aa).

ATP contacts are provided by residues 12–20 and Ala39; that span reads AYSGGLDTS. Tyr92 and Ser97 together coordinate L-citrulline. An ATP-binding site is contributed by Gly122. L-aspartate-binding residues include Thr124, Asn128, and Asp129. Asn128 provides a ligand contact to L-citrulline. The L-citrulline site is built by Arg132, Ser189, Ser198, Glu274, and Tyr286.

Belongs to the argininosuccinate synthase family. Type 1 subfamily. Homotetramer.

It is found in the cytoplasm. It catalyses the reaction L-citrulline + L-aspartate + ATP = 2-(N(omega)-L-arginino)succinate + AMP + diphosphate + H(+). Its pathway is amino-acid biosynthesis; L-arginine biosynthesis; L-arginine from L-ornithine and carbamoyl phosphate: step 2/3. The chain is Argininosuccinate synthase from Aliarcobacter butzleri (strain RM4018) (Arcobacter butzleri).